The following is a 253-amino-acid chain: Ubiquinone/menaquinone biosynthesis C-methyltransferase UbiE (253 aa).

Residues threonine 76, aspartate 97, and asparagine 125–alanine 126 contribute to the S-adenosyl-L-methionine site.

Belongs to the class I-like SAM-binding methyltransferase superfamily. MenG/UbiE family.

The catalysed reaction is a 2-demethylmenaquinol + S-adenosyl-L-methionine = a menaquinol + S-adenosyl-L-homocysteine + H(+). The enzyme catalyses a 2-methoxy-6-(all-trans-polyprenyl)benzene-1,4-diol + S-adenosyl-L-methionine = a 5-methoxy-2-methyl-3-(all-trans-polyprenyl)benzene-1,4-diol + S-adenosyl-L-homocysteine + H(+). It functions in the pathway quinol/quinone metabolism; menaquinone biosynthesis; menaquinol from 1,4-dihydroxy-2-naphthoate: step 2/2. Its pathway is cofactor biosynthesis; ubiquinone biosynthesis. Methyltransferase required for the conversion of demethylmenaquinol (DMKH2) to menaquinol (MKH2) and the conversion of 2-polyprenyl-6-methoxy-1,4-benzoquinol (DDMQH2) to 2-polyprenyl-3-methyl-6-methoxy-1,4-benzoquinol (DMQH2). The sequence is that of Ubiquinone/menaquinone biosynthesis C-methyltransferase UbiE from Stenotrophomonas maltophilia (strain K279a).